A 303-amino-acid chain; its full sequence is Oxygen-dependent coproporphyrinogen-III oxidase (303 aa).

Residue S94 coordinates substrate. Residues H98 and H108 each coordinate a divalent metal cation. The active-site Proton donor is H108. 110 to 112 (NVR) is a substrate binding site. Residues H147 and H177 each coordinate a divalent metal cation. Residues 242–277 (YVEFNLVYDRGTLFGLQTGGRTESILMSLPPLVRWE) are important for dimerization. Substrate is bound at residue 260–262 (GGR).

This sequence belongs to the aerobic coproporphyrinogen-III oxidase family. As to quaternary structure, homodimer. The cofactor is a divalent metal cation.

The protein localises to the cytoplasm. The catalysed reaction is coproporphyrinogen III + O2 + 2 H(+) = protoporphyrinogen IX + 2 CO2 + 2 H2O. Its pathway is porphyrin-containing compound metabolism; protoporphyrin-IX biosynthesis; protoporphyrinogen-IX from coproporphyrinogen-III (O2 route): step 1/1. In terms of biological role, involved in the heme biosynthesis. Catalyzes the aerobic oxidative decarboxylation of propionate groups of rings A and B of coproporphyrinogen-III to yield the vinyl groups in protoporphyrinogen-IX. In Saccharophagus degradans (strain 2-40 / ATCC 43961 / DSM 17024), this protein is Oxygen-dependent coproporphyrinogen-III oxidase.